Consider the following 88-residue polypeptide: Elongation factor 1-beta (88 aa).

Belongs to the EF-1-beta/EF-1-delta family.

Promotes the exchange of GDP for GTP in EF-1-alpha/GDP, thus allowing the regeneration of EF-1-alpha/GTP that could then be used to form the ternary complex EF-1-alpha/GTP/AAtRNA. The sequence is that of Elongation factor 1-beta from Natronomonas pharaonis (strain ATCC 35678 / DSM 2160 / CIP 103997 / JCM 8858 / NBRC 14720 / NCIMB 2260 / Gabara) (Halobacterium pharaonis).